A 232-amino-acid chain; its full sequence is Probable intron-encoded endonuclease aI3 (232 aa).

It belongs to the LAGLIDADG endonuclease family.

The protein resides in the mitochondrion. In terms of biological role, mitochondrial DNA endonuclease involved in intron homing. In Dictyostelium discoideum (Social amoeba), this protein is Probable intron-encoded endonuclease aI3 (aI3).